Here is a 234-residue protein sequence, read N- to C-terminus: Leucyl/phenylalanyl-tRNA--protein transferase (234 aa).

Belongs to the L/F-transferase family.

The protein localises to the cytoplasm. It catalyses the reaction N-terminal L-lysyl-[protein] + L-leucyl-tRNA(Leu) = N-terminal L-leucyl-L-lysyl-[protein] + tRNA(Leu) + H(+). The catalysed reaction is N-terminal L-arginyl-[protein] + L-leucyl-tRNA(Leu) = N-terminal L-leucyl-L-arginyl-[protein] + tRNA(Leu) + H(+). It carries out the reaction L-phenylalanyl-tRNA(Phe) + an N-terminal L-alpha-aminoacyl-[protein] = an N-terminal L-phenylalanyl-L-alpha-aminoacyl-[protein] + tRNA(Phe). Functions in the N-end rule pathway of protein degradation where it conjugates Leu, Phe and, less efficiently, Met from aminoacyl-tRNAs to the N-termini of proteins containing an N-terminal arginine or lysine. This chain is Leucyl/phenylalanyl-tRNA--protein transferase, found in Escherichia coli O45:K1 (strain S88 / ExPEC).